The following is a 520-amino-acid chain: Serine/threonine-protein kinases drp72 (520 aa).

The Protein kinase domain maps to 20 to 281 (YTLQWIVGHG…NELARAVSAV (262 aa)). ATP contacts are provided by residues 26 to 34 (VGHGGMSTV) and Lys49. The active-site Proton acceptor is Asp148. Disordered regions lie at residues 315-334 (ARPTTSVPASPTVLPERQEK) and 366-504 (SGDS…DAAD). Residues 374 to 394 (TPETITQTVTPTETTTSEEPT) show a composition bias toward low complexity. Residues 395–411 (LAPPPVQPTRQPVPTPD) are compositionally biased toward pro residues. Positions 416 to 429 (RLPTTTQESPTRVS) are enriched in polar residues. Positions 440–449 (EQTTPGGQPP) are enriched in low complexity. Polar residues predominate over residues 450-460 (LSTLPTSLGWQ). A compositionally biased stretch (low complexity) spans 469–484 (QGNPNTTGNPANPGTP). Gly residues predominate over residues 485–496 (GTTGGNGTGNAG).

It belongs to the protein kinase superfamily. Ser/Thr protein kinase family.

It carries out the reaction L-seryl-[protein] + ATP = O-phospho-L-seryl-[protein] + ADP + H(+). The catalysed reaction is L-threonyl-[protein] + ATP = O-phospho-L-threonyl-[protein] + ADP + H(+). This chain is Serine/threonine-protein kinases drp72, found in Corynebacterium efficiens (strain DSM 44549 / YS-314 / AJ 12310 / JCM 11189 / NBRC 100395).